A 248-amino-acid chain; its full sequence is Large ribosomal subunit protein uL2 (248 aa).

The interval 203-248 is disordered; that stretch reads AHPAGGGHHPKGLTPAPRNAPPGRKVGHIAPRRTGRKKGASRTPTQ. Residues 227-242 show a composition bias toward basic residues; the sequence is KVGHIAPRRTGRKKGA.

The protein belongs to the universal ribosomal protein uL2 family. In terms of assembly, part of the 50S ribosomal subunit. Forms a bridge to the 30S subunit in the 70S ribosome.

One of the primary rRNA binding proteins. Required for association of the 30S and 50S subunits to form the 70S ribosome, for tRNA binding and peptide bond formation. It has been suggested to have peptidyltransferase activity; this is somewhat controversial. Makes several contacts with the 16S rRNA in the 70S ribosome. The protein is Large ribosomal subunit protein uL2 of Thermofilum pendens (strain DSM 2475 / Hrk 5).